Consider the following 103-residue polypeptide: Large ribosomal subunit protein bL21 (103 aa).

It belongs to the bacterial ribosomal protein bL21 family. In terms of assembly, part of the 50S ribosomal subunit. Contacts protein L20.

This protein binds to 23S rRNA in the presence of protein L20. In Alcanivorax borkumensis (strain ATCC 700651 / DSM 11573 / NCIMB 13689 / SK2), this protein is Large ribosomal subunit protein bL21.